The following is a 343-amino-acid chain: N-acetyl-gamma-glutamyl-phosphate reductase (343 aa).

The active site involves Cys-146.

This sequence belongs to the NAGSA dehydrogenase family. Type 1 subfamily.

It localises to the cytoplasm. It catalyses the reaction N-acetyl-L-glutamate 5-semialdehyde + phosphate + NADP(+) = N-acetyl-L-glutamyl 5-phosphate + NADPH + H(+). It participates in amino-acid biosynthesis; L-arginine biosynthesis; N(2)-acetyl-L-ornithine from L-glutamate: step 3/4. Functionally, catalyzes the NADPH-dependent reduction of N-acetyl-5-glutamyl phosphate to yield N-acetyl-L-glutamate 5-semialdehyde. This Paenarthrobacter aurescens (strain TC1) protein is N-acetyl-gamma-glutamyl-phosphate reductase.